The following is a 498-amino-acid chain: MSSVRFSSALARRSFAVASPPLSAPLSSSARRFLSSSSSTISSSSSSVSTRSPRSLTSASSLLSSRTASARWTGLSSLNLTQSRTMATEIPKIKVKNPVVELDGDEMTRIIWQEIREKLILPYLDVDLKYYDLGLEYRDQTDDQVTVEAAEAIKKYGVGVKCATITPDEARVEEFKLKKMWLSPNGTIRNILGGTVFREPIIIPAIPRLVPGWNKPIIIGRHAFGDQYRATDRVIPGPGKLELVYTPVNGEPETVKVYDFQGGGIAQTQYNTDESIRGFAHASFQMALLKGLPLYMSTKNTILKRYDGRFKDIFQEIYESTYQKDFEAKNLWYEHRLIDDMVAQMIKSEGGFVMALKNYDGDVQSDIVAQGFGSLGLMTSTLVTPTGEAFESEAAHGTVTRHYREHQKGRETSTNPIASIFAWTRGLIQRGKLDETPDVVTFAEELERACIEVVNDEGIMTKDLALACGRKEREAWVTTREYMAAVERRLKANLKSRL.

NADP(+)-binding positions include 164–166 (TIT) and arginine 171. Threonine 166 serves as a coordination point for substrate. Substrate is bound by residues 183-189 (SPNGTIR), arginine 198, and arginine 221. Aspartate 339 provides a ligand contact to Mn(2+). Lysine 347 serves as a coordination point for NADP(+). Aspartate 362 is a binding site for Mn(2+). NADP(+) is bound by residues 397-402 (GTVTRH) and asparagine 415.

It belongs to the isocitrate and isopropylmalate dehydrogenases family. Mg(2+) serves as cofactor. It depends on Mn(2+) as a cofactor.

The protein resides in the mitochondrion. It catalyses the reaction D-threo-isocitrate + NADP(+) = 2-oxoglutarate + CO2 + NADPH. The polypeptide is Isocitrate dehydrogenase [NADP], mitochondrial (icdA) (Aspergillus niger).